The sequence spans 88 residues: Putative septation protein SpoVG (88 aa).

It belongs to the SpoVG family.

Its function is as follows. Could be involved in septation. In Caldicellulosiruptor bescii (strain ATCC BAA-1888 / DSM 6725 / KCTC 15123 / Z-1320) (Anaerocellum thermophilum), this protein is Putative septation protein SpoVG.